A 366-amino-acid polypeptide reads, in one-letter code: ADP-ribosylarginine hydrolase Tri1 (366 aa).

Positions 1–65 are N-terminal extension; the sequence is MIDLREDTWT…LNTPPCLIPE (65 aa). The ADP-ribosyl hydrolase domain stretch occupies residues 74 to 366; it reads GALVGLAIGD…LFYMAPEEDF (293 aa). Residues T116, D117, D118, D161, and D317 each contribute to the Mg(2+) site.

This sequence belongs to the ADP-ribosylglycohydrolase family. Forms a stable complex with cognate effector protein Tre1-Sp. The cofactor is Mg(2+).

It carries out the reaction N(omega)-(ADP-D-ribosyl)-L-arginyl-[protein] + H2O = ADP-D-ribose + L-arginyl-[protein]. Its function is as follows. Immunity component of a contact-dependent interbacterial competition system (also called effector-immunity systems). Acts as an arginine mono-ADP-ribosylhydrolase, mediating the removal of mono-ADP-ribose attached to arginine residues on proteins. De-ADP-ribosylates FtsZ, is able to act on other proteins as well. Neutralizes the toxic activity of cognate toxin Tre1-Sp. Expression of this protein alone in E.coli partially protects the cells against competition by wild-type S.proteamaculans. Neutralizes Tre1-Sp both by occluding its active site via its N-terminal extension and by hydrolyzing the ADP-ribosyl moiety from FtsZ; the 2 activities are dissociable by mutagenesis. This is ADP-ribosylarginine hydrolase Tri1 from Serratia proteamaculans (strain 568).